We begin with the raw amino-acid sequence, 535 residues long: Alpha-1,3-mannosyl-glycoprotein 4-beta-N-acetylglucosaminyltransferase A (535 aa).

Residues 1-4 (MRLR) lie on the Cytoplasmic side of the membrane. Residues 5–27 (NGTVATALAFITSFLTLSWYTTW) traverse the membrane as a helical; Signal-anchor for type II membrane protein segment. Positions 28–63 (QNGKEKLIAYQREFLALKERLRIAEHRISQRSSELN) form a coiled coil. At 28–535 (QNGKEKLIAY…NEIHIKKATN (508 aa)) the chain is on the lumenal side. Asn-77 and Asn-458 each carry an N-linked (GlcNAc...) asparagine glycan. Residue Ser-474 is modified to Phosphoserine.

This sequence belongs to the glycosyltransferase 54 family. It depends on a divalent metal cation as a cofactor. N-glycosylated.

The protein resides in the golgi apparatus membrane. It localises to the secreted. The catalysed reaction is N(4)-{beta-D-GlcNAc-(1-&gt;2)-alpha-D-Man-(1-&gt;3)-[beta-D-GlcNAc-(1-&gt;2)-alpha-D-Man-(1-&gt;6)]-beta-D-Man-(1-&gt;4)-beta-D-GlcNAc-(1-&gt;4)-beta-D-GlcNAc}-L-asparaginyl-[protein] + UDP-N-acetyl-alpha-D-glucosamine = N(4)-{beta-D-GlcNAc-(1-&gt;2)-[beta-D-GlcNAc-(1-&gt;4)]-alpha-D-Man-(1-&gt;3)-[beta-D-GlcNAc-(1-&gt;2)-alpha-D-Man-(1-&gt;6)]-beta-D-Man-(1-&gt;4)-beta-D-GlcNAc-(1-&gt;4)-beta-D-GlcNAc}-L-asparaginyl-[protein] + UDP + H(+). The enzyme catalyses an N(4)-{beta-D-GlcNAc-(1-&gt;2)-alpha-D-Man-(1-&gt;3)-[alpha-D-Man-(1-&gt;6)]-beta-D-Man-(1-&gt;4)-beta-D-GlcNAc-(1-&gt;4)-beta-D-GlcNAc}-L-asparaginyl-[protein] + UDP-N-acetyl-alpha-D-glucosamine = an N(4)-{beta-D-GlcNAc-(1-&gt;2)-[beta-D-GlcNAc-(1-&gt;4)]-alpha-D-Man-(1-&gt;3)-[alpha-D-Man-(1-&gt;6)]-beta-D-Man-(1-&gt;4)-beta-D-GlcNAc-(1-&gt;4)-beta-D-GlcNAc}-L-asparaginyl-[protein] + UDP + H(+). It catalyses the reaction an N(4)-{beta-D-GlcNAc-(1-&gt;2)-alpha-D-Man-(1-&gt;3)-[beta-D-GlcNAc-(1-&gt;2)-[beta-D-GlcNAc-(1-&gt;6)]-alpha-D-Man-(1-&gt;6)]-beta-D-Man-(1-&gt;4)-beta-D-GlcNAc-(1-&gt;4)-beta-D-GlcNAc}-L-asparaginyl-[protein] + UDP-N-acetyl-alpha-D-glucosamine = an N(4)-{beta-D-GlcNAc-(1-&gt;2)-[beta-D-GlcNAc-(1-&gt;4)]-alpha-D-Man-(1-&gt;3)-[beta-D-GlcNAc-(1-&gt;2)-[beta-D-GlcNAc-(1-&gt;6)]-alpha-D-Man-(1-&gt;6)]-beta-D-Man-(1-&gt;4)-beta-D-GlcNAc-(1-&gt;4)-beta-D-GlcNAc}-L-asparaginyl-[protein] + UDP + H(+). It carries out the reaction an N(4)-{beta-D-GlcNAc-(1-&gt;2)-alpha-D-Man-(1-&gt;3)-[beta-D-GlcNAc-(1-&gt;2)-alpha-D-Man-(1-&gt;6)]-beta-D-Man-(1-&gt;4)-beta-D-GlcNAc-(1-&gt;4)-[alpha-L-Fuc-(1-&gt;6)]-beta-D-GlcNAc}-L-asparaginyl-[protein] + UDP-N-acetyl-alpha-D-glucosamine = N(4)-{beta-D-GlcNAc-(1-&gt;2)-[beta-D-GlcNAc-(1-&gt;4)]-alpha-D-Man-(1-&gt;3)-[beta-D-GlcNAc-(1-&gt;2)-alpha-D-Man-(1-&gt;6)]-beta-D-Man-(1-&gt;4)-beta-D-GlcNAc-(1-&gt;4)-[alpha-L-Fuc-(1-&gt;6)]-beta-D-GlcNAc}-asparaginyl-[protein] + UDP + H(+). The catalysed reaction is an N(4)-{beta-D-GlcNAc-(1-&gt;2)-alpha-D-Man-(1-&gt;3)-[beta-D-Gal-(1-&gt;4)-beta-D-GlcNAc-(1-&gt;2)-alpha-D-Man-(1-&gt;6)]-beta-D-Man-(1-&gt;4)-beta-D-GlcNAc-(1-&gt;4)-beta-D-GlcNAc}-L-asparaginyl-[protein] + UDP-N-acetyl-alpha-D-glucosamine = an N(4)-{beta-D-GlcNAc-(1-&gt;2)-[beta-D-GlcNAc-(1-&gt;4)]-alpha-D-Man-(1-&gt;3)-[beta-D-Gal-(1-&gt;4)-beta-D-GlcNAc-(1-&gt;2)-alpha-D-Man-(1-&gt;6)]-beta-D-Man-(1-&gt;4)-beta-D-GlcNAc-(1-&gt;4)-beta-D-GlcNAc}-L-asparaginyl-[protein] + UDP + H(+). The enzyme catalyses N(4)-{beta-D-GlcNAc-(1-&gt;2)-alpha-D-Man-(1-&gt;3)-[alpha-D-Man-(1-&gt;3)-{alpha-D-Man-(1-&gt;6)}-alpha-D-Man-(1-&gt;6)]-beta-D-Man-(1-&gt;4)-beta-D-GlcNAc-(1-&gt;4)-beta-D-GlcNAc}-asparaginyl-[protein] + UDP-N-acetyl-alpha-D-glucosamine = N(4)-{beta-D-GlcNAc-(1-&gt;2)-[beta-D-GlcNAc-(1-&gt;4)]-alpha-D-Man-(1-&gt;3)-[alpha-D-Man-(1-&gt;3)-{alpha-D-Man-(1-&gt;6)}-alpha-D-Man-(1-&gt;6)]-beta-D-Man-(1-&gt;4)-beta-D-GlcNAc-(1-&gt;4)-beta-D-GlcNAc}-asparaginyl-[protein] + UDP + H(+). It catalyses the reaction N(4)-{beta-D-GlcNAc-(1-&gt;2)-alpha-D-Man-(1-&gt;3)-beta-D-Man-(1-&gt;4)-beta-D-GlcNAc-(1-&gt;4)-beta-D-GlcNAc}-asparaginyl-[protein] + UDP-N-acetyl-alpha-D-glucosamine = N(4)-{beta-D-GlcNAc-(1-&gt;2)-[beta-D-GlcNAc-(1-&gt;4)]-alpha-D-Man-(1-&gt;3)-beta-D-Man-(1-&gt;4)-beta-D-GlcNAc-(1-&gt;4)-beta-D-GlcNAc}-asparaginyl-[protein] + UDP + H(+). It participates in protein modification; protein glycosylation. Inhibited by UDP. Glycosyltransferase that catalyze the transfer of GlcNAc from UDP-GlcNAc to the GlcNAcbeta1-2Manalpha1-3 arm of the core structure of N-linked glycans through a beta1-4 linkage and participates in the production of tri- and tetra-antennary N-linked sugar chains. Involved in glucose transport by mediating SLC2A2/GLUT2 glycosylation, thereby controlling cell-surface expression of SLC2A2 in pancreatic beta cells. The sequence is that of Alpha-1,3-mannosyl-glycoprotein 4-beta-N-acetylglucosaminyltransferase A from Pongo abelii (Sumatran orangutan).